A 508-amino-acid polypeptide reads, in one-letter code: Cobyric acid synthase (508 aa).

The GATase cobBQ-type domain maps to 266-464 (SLRIAVVAYP…AHGLFESTEV (199 aa)). Cys347 acts as the Nucleophile in catalysis. His456 is an active-site residue.

This sequence belongs to the CobB/CobQ family. CobQ subfamily.

The protein operates within cofactor biosynthesis; adenosylcobalamin biosynthesis. Functionally, catalyzes amidations at positions B, D, E, and G on adenosylcobyrinic A,C-diamide. NH(2) groups are provided by glutamine, and one molecule of ATP is hydrogenolyzed for each amidation. This Methylibium petroleiphilum (strain ATCC BAA-1232 / LMG 22953 / PM1) protein is Cobyric acid synthase.